The chain runs to 144 residues: Large ribosomal subunit protein uL15 (144 aa).

Positions 20 to 49 are disordered; that stretch reads GRGIGSGLGKTGGRGHKGQKSRSGGFHKVG. Residues 21 to 31 show a composition bias toward gly residues; it reads RGIGSGLGKTG.

Belongs to the universal ribosomal protein uL15 family. In terms of assembly, part of the 50S ribosomal subunit.

In terms of biological role, binds to the 23S rRNA. This Neisseria meningitidis serogroup A / serotype 4A (strain DSM 15465 / Z2491) protein is Large ribosomal subunit protein uL15.